The following is a 464-amino-acid chain: Argininosuccinate lyase (464 aa).

This sequence belongs to the lyase 1 family. Argininosuccinate lyase subfamily.

It is found in the cytoplasm. It carries out the reaction 2-(N(omega)-L-arginino)succinate = fumarate + L-arginine. The protein operates within amino-acid biosynthesis; L-arginine biosynthesis; L-arginine from L-ornithine and carbamoyl phosphate: step 3/3. In Ectopseudomonas mendocina (strain ymp) (Pseudomonas mendocina), this protein is Argininosuccinate lyase.